We begin with the raw amino-acid sequence, 40 residues long: Antimicrobial peptide 2 (40 aa).

Residues 1 to 40 enclose the Chitin-binding type-1 domain; that stretch reads AQCGAQGGGATCPGGLCCSQWGWCGSTPKYCGAGCQSNCR. 4 disulfide bridges follow: cysteine 3/cysteine 18, cysteine 12/cysteine 24, cysteine 17/cysteine 31, and cysteine 35/cysteine 39.

In terms of processing, not glycosylated.

In terms of biological role, antimicrobial peptide active against plant pathogenic fungi and Gram-negative and -positive bacteria. In Fagopyrum esculentum (Common buckwheat), this protein is Antimicrobial peptide 2.